Consider the following 758-residue polypeptide: MVRTKNQSSSSSASSSSTKSPIKSSSGAGSSGGGVGGRQSTHRSSSASNVAAVVAGGSSAAGGGSSSNRRSPGSSPDGDDDTTTTDDLTPTTCSPRSGHHHSYGGYSSSVHKQNLYVVSFPIIFLFNVLRSLIYQLFCIFRYLYGASTKVIYRPHRRDCNIEIVVQNSSKEQQQSLNHPSELNREGDGQEQQLSNQPQRFRPIQPLEMAANRPGGGYSPGPGDPLLAKQKHHHRRAFEYISKALKIDEENEGHKELAIELYRKGIKELEDGIAVDCWSGRGDVWDRAQRLHDKMQTNLSMARDRLHFLALREQDLQMQRLSLKEKQKEEARSKPQKSREPMLAGMTNEPMKLRVRSSGYGPKATTSAQPTASGRKLTIGSKRPVNLAVANKSQTLPRNLGSKTSVGAVQRQPAKTAATPPAVRRQFSSGRNTPPQRSRTPINNNGPSGSGASTPVVSVKGVEQKLVQLILDEIVEGGAKVEWTDIAGQDVAKQALQEMVILPSVRPELFTGLRAPAKGLLLFGPPGNGKTLLARAVATECSATFLNISAASLTSKYVGDGEKLVRALFAVARHMQPSIIFIDEVDSLLSERSSSEHEASRRLKTEFLVEFDGLPGNPDGDRIVVLAATNRPQELDEAALRRFTKRVYVSLPDEQTRELLLNRLLQKQGSPLDTEALRRLAKITDGYSGSDLTARPKDAALEPIRELNVEQVKCLDISAMRAITEQDFHSSLKRIRRSVAPQSLNSYEKWSQDYGDITI.

The tract at residues 1 to 103 is disordered; sequence MVRTKNQSSS…SPRSGHHHSY (103 aa). At 1 to 121 the chain is on the cytoplasmic side; it reads MVRTKNQSSS…KQNLYVVSFP (121 aa). The required for localization to punctate cytoplasmic foci stretch occupies residues 1–210; that stretch reads MVRTKNQSSS…RPIQPLEMAA (210 aa). Low complexity-rich tracts occupy residues 8–28, 43–58, 66–76, and 85–95; these read SSSSSASSSSTKSPIKSSSGA, RSSSASNVAAVVAGGS, SSNRRSPGSSP, and TDDLTPTTCSP. Positions 122-142 form an intramembrane region, helical; that stretch reads IIFLFNVLRSLIYQLFCIFRY. Residues 143 to 758 are Cytoplasmic-facing; that stretch reads LYGASTKVIY…WSQDYGDITI (616 aa). Polar residues-rich tracts occupy residues 169–180 and 189–198; these read SKEQQQSLNHPS and QEQQLSNQPQ. The disordered stretch occupies residues 169–202; that stretch reads SKEQQQSLNHPSELNREGDGQEQQLSNQPQRFRP. Positions 208–758 are sufficient for interaction with microtubules and microtubule severing; that stretch reads MAANRPGGGY…WSQDYGDITI (551 aa). Residues 233–308 form the MIT domain; the sequence is HRRAFEYISK…SMARDRLHFL (76 aa). The span at 323-339 shows a compositional bias: basic and acidic residues; sequence KEKQKEEARSKPQKSRE. The disordered stretch occupies residues 323–454; that stretch reads KEKQKEEARS…GPSGSGASTP (132 aa). 2 stretches are compositionally biased toward polar residues: residues 390-406 and 425-454; these read NKSQTLPRNLGSKTSVG and QFSSGRNTPPQRSRTPINNNGPSGSGASTP. The required for interaction with microtubules stretch occupies residues 443–455; that stretch reads NNGPSGSGASTPV. An ATP-binding site is contributed by 523–530; that stretch reads GPPGNGKT.

Belongs to the AAA ATPase family. Spastin subfamily. As to quaternary structure, homohexamer. The homohexamer is stabilized by ATP-binding. The homohexamer may adopt a ring conformation through which microtubules pass prior to being severed. Interacts with microtubules. Interacts with atl; may be involved in microtubule dynamics.

It localises to the membrane. Its subcellular location is the cytoplasm. The protein localises to the cytoskeleton. The protein resides in the microtubule organizing center. It is found in the centrosome. It localises to the chromosome. Its subcellular location is the lipid droplet. The catalysed reaction is n ATP + n H2O + a microtubule = n ADP + n phosphate + (n+1) alpha/beta tubulin heterodimers.. In terms of biological role, ATP-dependent microtubule severing protein. Stimulates microtubule minus-end depolymerization and poleward microtubule flux in the mitotic spindle. Regulates microtubule stability in the neuromuscular junction synapse. Involved in lipid metabolism by regulating the size and distribution of lipid droplets. Involved in axon regeneration by regulating microtubule severing. The sequence is that of Spastin from Drosophila simulans (Fruit fly).